A 128-amino-acid polypeptide reads, in one-letter code: Large ribosomal subunit protein bL17 (128 aa).

Belongs to the bacterial ribosomal protein bL17 family. In terms of assembly, part of the 50S ribosomal subunit. Contacts protein L32.

This is Large ribosomal subunit protein bL17 from Enterobacter sp. (strain 638).